The chain runs to 251 residues: Phosphoribosylaminoimidazole-succinocarboxamide synthase (251 aa).

It belongs to the SAICAR synthetase family.

It carries out the reaction 5-amino-1-(5-phospho-D-ribosyl)imidazole-4-carboxylate + L-aspartate + ATP = (2S)-2-[5-amino-1-(5-phospho-beta-D-ribosyl)imidazole-4-carboxamido]succinate + ADP + phosphate + 2 H(+). Its pathway is purine metabolism; IMP biosynthesis via de novo pathway; 5-amino-1-(5-phospho-D-ribosyl)imidazole-4-carboxamide from 5-amino-1-(5-phospho-D-ribosyl)imidazole-4-carboxylate: step 1/2. This chain is Phosphoribosylaminoimidazole-succinocarboxamide synthase, found in Phenylobacterium zucineum (strain HLK1).